Reading from the N-terminus, the 616-residue chain is DEAD-box ATP-dependent RNA helicase 53, mitochondrial (616 aa).

The transit peptide at Met-1–Ala-81 directs the protein to the mitochondrion. Residues Leu-104 to Lys-132 carry the Q motif motif. The Helicase ATP-binding domain occupies Leu-135–Val-309. Ala-148–Thr-155 provides a ligand contact to ATP. The DEAD box signature appears at Asp-257–Asp-260. In terms of domain architecture, Helicase C-terminal spans Ile-338 to Gly-482. The interval Gly-489 to Tyr-616 is disordered. Composition is skewed to gly residues over residues Ser-492–Gly-501 and Ser-508–Gly-531. Low complexity-rich tracts occupy residues Gly-532–Arg-568 and Gly-578–Phe-587.

The protein belongs to the DEAD box helicase family. DDX21/DDX50 subfamily.

It is found in the mitochondrion. It catalyses the reaction ATP + H2O = ADP + phosphate + H(+). The chain is DEAD-box ATP-dependent RNA helicase 53, mitochondrial (RH53) from Arabidopsis thaliana (Mouse-ear cress).